The sequence spans 748 residues: Acetyl-CoA decarbonylase/synthase complex subunit beta 1 (748 aa).

[Ni-Fe-S] cluster contacts are provided by C480, C483, C569, and C571.

It belongs to the CdhC family. In terms of assembly, monomer. The ACDS complex is made up of alpha, epsilon, beta, gamma and delta chains with a probable stoichiometry of (alpha(2)epsilon(2))(4)-beta(8)-(gamma(1)delta(1))(8) (Potential). [Ni-Fe-S] cluster is required as a cofactor.

It carries out the reaction Co(I)-[corrinoid Fe-S protein] + acetyl-CoA + H(+) = methyl-Co(III)-[corrinoid Fe-S protein] + CO + CoA. Part of a complex that catalyzes the reversible cleavage of acetyl-CoA, allowing autotrophic growth from CO(2). The alpha-epsilon complex generates CO from CO(2), while the beta subunit (this protein) combines the CO with CoA and a methyl group to form acetyl-CoA. The methyl group, which is incorporated into acetyl-CoA, is transferred to the beta subunit by a corrinoid iron-sulfur protein (the gamma-delta complex). This Methanocaldococcus jannaschii (strain ATCC 43067 / DSM 2661 / JAL-1 / JCM 10045 / NBRC 100440) (Methanococcus jannaschii) protein is Acetyl-CoA decarbonylase/synthase complex subunit beta 1 (cdhC1).